Reading from the N-terminus, the 127-residue chain is Large ribosomal subunit protein bL20 (127 aa).

The protein belongs to the bacterial ribosomal protein bL20 family.

Its function is as follows. Binds directly to 23S ribosomal RNA and is necessary for the in vitro assembly process of the 50S ribosomal subunit. It is not involved in the protein synthesizing functions of that subunit. In Corynebacterium urealyticum (strain ATCC 43042 / DSM 7109), this protein is Large ribosomal subunit protein bL20.